The primary structure comprises 905 residues: Transcriptional regulator MNL1 (905 aa).

Residues 1-29 (MDSHNNIDQSVSELLSDPASVQQSYNSQL) show a composition bias toward polar residues. 8 disordered regions span residues 1–34 (MDSHNNIDQSVSELLSDPASVQQSYNSQLRGPEF), 312–340 (QTQAQAQAHQQQQQQSQQQHSPQDLASHT), 383–419 (MDQVPSSLHRPSFDLYNHRPSIDSQHSQQSQQRNARY), 434–460 (SEKNTNHNNRSPPTPPTSTSSPQNLLS), 525–544 (TKEEPEDELMQPKKVKKPKR), 584–613 (NISSHHSSGTPSITTGAGGNTLEHSISESS), 625–671 (NVGK…GTVE), and 685–733 (PASE…TSST). A compositionally biased stretch (low complexity) spans 312 to 334 (QTQAQAQAHQQQQQQSQQQHSPQ). Residues 439–460 (NHNNRSPPTPPTSTSSPQNLLS) show a composition bias toward low complexity. Positions 584-598 (NISSHHSSGTPSITT) are enriched in polar residues. Residues 628–639 (KRKNKSYRKPKG) are compositionally biased toward basic residues. 2 stretches are compositionally biased toward low complexity: residues 647 to 669 (QQQQLPLSSGTAGGTSSNNSTGT) and 690 to 710 (SSLLDNASAGNASASSSEASS). 2 consecutive C2H2-type zinc fingers follow at residues 832 to 855 (YLCNLCQRRFKRHEHLKRHFRSLH) and 861 to 883 (YNCDICHKKFSRSDNLNQHLKIH). The interval 885-905 (QEDEKDCADAETGVGMDDASG) is disordered.

It localises to the nucleus. Transcription factor that activates stress response genes via SLE (STRE-like) elements. Required for adaptation to weak acid stress such as acetic acid stress, but seems not involved in the response to heat, osmotic, ethanol, nutrient, oxidative, or heavy-metal stress. Activates a subset of the genes that are repressed by NRG1. This Candida albicans (strain SC5314 / ATCC MYA-2876) (Yeast) protein is Transcriptional regulator MNL1 (MNL1).